The primary structure comprises 336 residues: Alpha-N-acetylgalactosaminide alpha-2,6-sialyltransferase 5 (336 aa).

The Cytoplasmic segment spans residues 1-8 (MKTLMRHG). The helical; Signal-anchor for type II membrane protein transmembrane segment at 9-29 (LAVCLVLTTMCTSLLLVYSSL) threads the bilayer. The Lumenal portion of the chain corresponds to 30 to 336 (GSQKERPPQQ…VNHAEGKPVF (307 aa)). Positions 34 to 76 (ERPPQQQQQQQQQQQQAATATGSTQLVESSPQPRRTAPAGPRQ) are disordered. Low complexity predominate over residues 38 to 49 (QQQQQQQQQQQQ). Over residues 50 to 66 (AATATGSTQLVESSPQP) the composition is skewed to polar residues. Cys-96 and Cys-245 are joined by a disulfide. N-linked (GlcNAc...) asparagine glycosylation is found at Asn-137 and Asn-161.

It belongs to the glycosyltransferase 29 family. In terms of tissue distribution, high expression in forebrain and to a lesser extent in cerebellum. No expression in salivary gland, intestine, liver, kidney, heart, lung, thymus and spleen.

It localises to the golgi apparatus membrane. It carries out the reaction a ganglioside GM1b (d18:1(4E)) + CMP-N-acetyl-beta-neuraminate = a ganglioside GD1alpha (d18:1(4E)) + CMP + H(+). The catalysed reaction is N-acetyl-alpha-neuraminosyl-(2-&gt;3)-beta-D-galactosyl-(1-&gt;3)-N-acetyl-beta-D-glucosaminyl-(1-&gt;3)-beta-D-galactosyl-(1-&gt;4)-beta-D-glucosyl-(1&lt;-&gt;1')-N-acyl-sphing-4-enine + CMP-N-acetyl-beta-neuraminate = N-acetyl-alpha-neuraminosyl-(2-&gt;3)-beta-D-galactosyl-(1-&gt;3)-[N-acetyl-alpha-neuraminosyl-(2-&gt;6)]-N-acetyl-beta-D-glucosaminyl-(1-&gt;3)-beta-D-galactosyl-(1-&gt;4)-beta-D-glucosyl-(1&lt;-&gt;1')-N-acyl-sphing-4-enine + CMP + H(+). The protein operates within glycolipid biosynthesis. Predominantly catalyzes the biosynthesis of ganglioside GD1alpha from GM1b in the brain, by transferring the sialyl group (N-acetyl-alpha-neuraminyl or NeuAc) from CMP-NeuAc to the GalNAc residue on the NeuAc-alpha-2,3-Gal-beta-1,3-GalNAc sequence of GM1b. GD1alpha is a critical molecule in the communication and interaction between neuronal cells and their supportive cells, particularly in brain tissues, and functions as an adhesion molecule in the process of metastasis. Also shows activity towards sialyl Lc4Cer (N-acetyl-alpha-neuraminosyl-(2-&gt;3)-beta-D-galactosyl-(1-&gt;3)-N-acetyl-beta-D-glucosaminyl-(1-&gt;3)-beta-D-galactosyl-(1-&gt;4)-beta-D-glucosyl-(1&lt;-&gt;1')-N-acyl-sphing-4-enine) generating disialyl Lc4Cer, which can lead to the synthesis of disialyl Lewis a (Le(a)), suggested to be a cancer-associated antigen. This Mus musculus (Mouse) protein is Alpha-N-acetylgalactosaminide alpha-2,6-sialyltransferase 5 (St6galnac5).